The following is a 372-amino-acid chain: Carbamoyl phosphate synthase small chain (372 aa).

The tract at residues 1–182 (MTLYCKRGYK…PKAPIVHLGN (182 aa)) is CPSase. Positions 53, 234, and 236 each coordinate L-glutamine. The Glutamine amidotransferase type-1 domain occupies 186–372 (TIVVVDCGVK…KFKKMVSRNA (187 aa)). Residue C262 is the Nucleophile of the active site. 5 residues coordinate L-glutamine: L263, Q266, N304, G306, and Y307. Catalysis depends on residues H347 and E349.

This sequence belongs to the CarA family. As to quaternary structure, composed of two chains; the small (or glutamine) chain promotes the hydrolysis of glutamine to ammonia, which is used by the large (or ammonia) chain to synthesize carbamoyl phosphate. Tetramer of heterodimers (alpha,beta)4.

It carries out the reaction hydrogencarbonate + L-glutamine + 2 ATP + H2O = carbamoyl phosphate + L-glutamate + 2 ADP + phosphate + 2 H(+). It catalyses the reaction L-glutamine + H2O = L-glutamate + NH4(+). The protein operates within amino-acid biosynthesis; L-arginine biosynthesis; carbamoyl phosphate from bicarbonate: step 1/1. Its pathway is pyrimidine metabolism; UMP biosynthesis via de novo pathway; (S)-dihydroorotate from bicarbonate: step 1/3. Its function is as follows. Small subunit of the glutamine-dependent carbamoyl phosphate synthetase (CPSase). CPSase catalyzes the formation of carbamoyl phosphate from the ammonia moiety of glutamine, carbonate, and phosphate donated by ATP, constituting the first step of 2 biosynthetic pathways, one leading to arginine and/or urea and the other to pyrimidine nucleotides. The small subunit (glutamine amidotransferase) binds and cleaves glutamine to supply the large subunit with the substrate ammonia. This Sulfurisphaera tokodaii (strain DSM 16993 / JCM 10545 / NBRC 100140 / 7) (Sulfolobus tokodaii) protein is Carbamoyl phosphate synthase small chain.